The chain runs to 197 residues: MSASRFIKCVTVGDGAVGKTCLLISYTSNTFPTDYVPTVFDNFSANVVVDGSTVNLGLWDTAGQEDYNRLRPLSYRGADVFILAFSLISKASYENIAKKWIPELRHYAPGVPIILVGTKLDLRDDKHFLADHPGAVPITTAQGEELRKLIGAPAYIECSSKTQQNVKAVFDAAIKVVLQPPKQKKKKREAQKSCSIL.

Position 13–20 (13–20 (GDGAVGKT)) interacts with GTP. An Effector region motif is present at residues 35–43 (YVPTVFDNF). GTP is bound by residues 60–64 (DTAGQ) and 118–121 (TKLD). Cysteine 194 is subject to Cysteine methyl ester. The S-geranylgeranyl cysteine moiety is linked to residue cysteine 194. Residues 195–197 (SIL) constitute a propeptide, removed in mature form.

This sequence belongs to the small GTPase superfamily. Rho family.

The protein localises to the cytoplasm. Its subcellular location is the membrane. Inactive GDP-bound Rho GTPases reside in the cytosol, are found in a complex with Rho GDP-dissociation inhibitors (Rho GDIs), and are released from the GDI protein in order to translocate to membranes upon activation. In Lotus japonicus (Lotus corniculatus var. japonicus), this protein is Rac-like GTP-binding protein RAC1 (RAC1).